Here is a 414-residue protein sequence, read N- to C-terminus: Lysocardiolipin acyltransferase 1 (414 aa).

The next 2 helical transmembrane spans lie at 47 to 67 (FILTLFWGSFFGSIFMLSPFL) and 86 to 106 (ATWLTLPVALLETMFGVKVII). The HXXXXD motif motif lies at 123–128 (HRTRMD). Lys221 is subject to N6-acetyllysine. 2 helical membrane passes run 340 to 360 (LRVLVVKLLSILYWTLFSPAM) and 362 to 382 (LLIYLYSLVKWYFIITIVIFV).

Belongs to the 1-acyl-sn-glycerol-3-phosphate acyltransferase family. As to expression, expressed at higher level in heart, kidney and pancreas than in brain, spleen, liver, lung, small intestine and placenta.

Its subcellular location is the endoplasmic reticulum membrane. It carries out the reaction a 1-acyl-sn-glycero-3-phosphate + an acyl-CoA = a 1,2-diacyl-sn-glycero-3-phosphate + CoA. It catalyses the reaction a 1-acyl-sn-glycero-3-phospho-(1D-myo-inositol) + an acyl-CoA = a 1,2-diacyl-sn-glycero-3-phospho-(1D-myo-inositol) + CoA. The catalysed reaction is 1-acyl-sn-glycero-3-phospho-(1'-sn-glycerol) + an acyl-CoA = a 1,2-diacyl-sn-glycero-3-phospho-(1'-sn-glycerol) + CoA. The enzyme catalyses 1-hexadecanoyl-sn-glycero-3-phosphate + (9Z)-octadecenoyl-CoA = 1-hexadecanoyl-2-(9Z-octadecenoyl)-sn-glycero-3-phosphate + CoA. It carries out the reaction 1-(9Z-octadecenoyl)-sn-glycero-3-phosphate + (9Z)-octadecenoyl-CoA = 1,2-di-(9Z-octadecenoyl)-sn-glycero-3-phosphate + CoA. It catalyses the reaction 1-(9Z,12Z)-octadecadienoyl-sn-glycero-3-phosphate + (9Z)-octadecenoyl-CoA = 1-(9Z,12Z)-octadecadienoyl-2-(9Z)-octadecenoyl-sn-glycero-3-phosphate + CoA. The catalysed reaction is 1-(9Z,12Z,15Z)-octadecatrienoyl-sn-glycero-3-phosphate + (9Z)-octadecenoyl-CoA = 1-(9Z,12Z,15Z)-octadecatrienoyl-2-(9Z)-octadecenoyl-sn-glycero-3-phosphate + CoA. The enzyme catalyses 1-(9Z-octadecenoyl)-sn-glycero-3-phosphate + hexadecanoyl-CoA = 1-(9Z)-octadecenoyl-2-hexadecanoyl-sn-glycero-3-phosphate + CoA. It carries out the reaction 1-(9Z-octadecenoyl)-sn-glycero-3-phosphate + octadecanoyl-CoA = 1-(9Z-octadecenoyl)-2-octadecanoyl-sn-glycero-3-phosphate + CoA. It catalyses the reaction 1-acyl-sn-glycero-3-phospho-(1'-sn-glycerol) + (9Z)-octadecenoyl-CoA = 1-acyl-2-(9Z-octadecenoyl)-sn-glycero-3-phospho-(1'-sn-glycerol) + CoA. The catalysed reaction is a 1-acyl-sn-glycero-3-phospho-(1D-myo-inositol) + (9Z)-octadecenoyl-CoA = a 1-acyl-2-(9Z-octadecenoyl)-sn-glycero-3-phospho-(1D-myo-inositol) + CoA. The enzyme catalyses 1-hexadecanoyl-sn-glycero-3-phospho-(1D-myo-inositol) + hexadecanoyl-CoA = 1,2-dihexadecanoyl-sn-glycero-3-phospho-(1D-myo-inositol) + CoA. It carries out the reaction 1-hexadecanoyl-sn-glycero-3-phospho-(1D-myo-inositol) + octadecanoyl-CoA = 1-hexadecanoyl-2-octadecanoyl-sn-glycero-3-phospho-(1D-myo-inositol) + CoA. It catalyses the reaction 1-hexadecanoyl-sn-glycero-3-phospho-(1D-myo-inositol) + (9Z)-octadecenoyl-CoA = 1-hexadecanoyl-2-(9Z-octadecenoyl)-sn-glycero-3-phospho-(1D-myo-inositol) + CoA. The catalysed reaction is 1-hexadecanoyl-sn-glycero-3-phospho-(1D-myo-inositol) + (9Z,12Z)-octadecadienoyl-CoA = 1-hexadecanoyl-2-(9Z,12Z-octadecadienoyl)-sn-glycero-3-phospho-(1D-myo-inositol) + CoA. The enzyme catalyses 1-hexadecanoyl-sn-glycero-3-phospho-(1D-myo-inositol) + (5Z,8Z,11Z,14Z)-eicosatetraenoyl-CoA = 1-hexadecanoyl-2-(5Z,8Z,11Z,14Z-eicosatetraenoyl)-sn-glycero-3-phospho-D-myo-inositol + CoA. It carries out the reaction 1-hexadecanoyl-sn-glycero-3-phospho-(1'-sn-glycerol) + hexadecanoyl-CoA = 1,2-dihexadecanoyl-sn-glycero-3-phospho-(1'-sn-glycerol) + CoA. It catalyses the reaction 1-hexadecanoyl-sn-glycero-3-phospho-(1'-sn-glycerol) + octadecanoyl-CoA = 1-hexadecanoyl-2-octadecanoyl-sn-glycero-3-phospho-(1'-sn-glycerol) + CoA. The catalysed reaction is 1-hexadecanoyl-sn-glycero-3-phospho-(1'-sn-glycerol) + (9Z)-octadecenoyl-CoA = 1-hexadecanoyl-2-(9Z-octadecenoyl)-sn-glycero-3-phospho-(1'-sn-glycerol) + CoA. The enzyme catalyses 1-hexadecanoyl-sn-glycero-3-phospho-(1'-sn-glycerol) + (9Z,12Z)-octadecadienoyl-CoA = 1-hexadecanoyl-2-(9Z,12Z-octadecadienoyl)-sn-glycero-3-phospho-(1'-sn-glycerol) + CoA. It carries out the reaction 1-tetradecanoyl-sn-glycero-3-phospho-(1'-sn-glycerol) + (9Z)-octadecenoyl-CoA = 1-tetradecanoyl-2-(9Z-octadecenoyl)-sn-glycero-3-phospho-(1'-sn-glycerol) + CoA. It catalyses the reaction 1-octadecanoyl-sn-glycero-3-phospho-(1'-sn-glycerol) + (9Z)-octadecenoyl-CoA = 1-octadecanoyl-2-(9Z-octadecenoyl)-sn-glycero-3-phospho-(1'-sn-glycerol) + CoA. The catalysed reaction is 1-(9Z-octadecenoyl)-sn-glycero-3-phospho-(1'-sn-glycerol) + (9Z)-octadecenoyl-CoA = 1,2-di-(9Z-octadecenoyl)-sn-glycero-3-phospho-(1'-sn-glycerol) + CoA. The enzyme catalyses 1-hexadecanoyl-sn-glycero-3-phospho-(1D-myo-inositol) + dodecanoyl-CoA = 1-hexadecanoyl-2-dodecanoyl-sn-glycero-3-phospho-(1D-myo-inositol) + CoA. It carries out the reaction 1',3'-bis-[1-acyl-sn-glycero-3-phospho]-glycerol + (9Z)-octadecenoyl-CoA = 1'-[1-acyl-2-(9Z)-octadecenoyl-sn-glycero-3-phospho],3'-[1-acyl,2-hydroxy-sn-glycero-3-phospho]-glycerol + CoA. It catalyses the reaction 1'-[1,2-diacyl-sn-glycero-3-phospho],3'-[1-acyl-sn-glycero-3-phospho]-glycerol + (9Z)-octadecenoyl-CoA = 1'-[1,2-diacyl-sn-glycero-3-phospho],3'-[1-acyl,2-(9Z)-octadecenoyl-sn-glycero-3-phospho]-glycerol + CoA. The catalysed reaction is 1'-[1,2-diacyl-sn-glycero-3-phospho],3'-[1-acyl-sn-glycero-3-phospho]-glycerol + (9Z,12Z)-octadecadienoyl-CoA = 1'-[1,2-diacyl-sn-glycero-3-phospho],3'-[1-acyl,2-(9Z,12Z)-octadecadienoyl-sn-glycero-3-phospho]-glycerol + CoA. The enzyme catalyses 1'-[1,2-diacyl-sn-glycero-3-phospho],3'-[1-acyl-sn-glycero-3-phospho]-glycerol + dodecanoyl-CoA = 1'-[1,2-diacyl-sn-glycero-3-phospho],3'-[1-acyl,2-dodecanoyl-sn-glycero-3-phospho]-glycerol + CoA. It carries out the reaction 1',3'-bis-[1-acyl-sn-glycero-3-phospho]-glycerol + dodecanoyl-CoA = 1'-[1-acyl-2-dodecanoyl-sn-glycero-3-phospho],3'-[1-acyl,2-hydroxy-sn-glycero-3-phospho]-glycerol + CoA. It catalyses the reaction a 1-acyl-sn-glycero-3-phosphate + (9Z)-octadecenoyl-CoA = a 1-acyl-2-(9Z-octadecenoyl)-sn-glycero-3-phosphate + CoA. The catalysed reaction is 1',3'-bis-[1-acyl-sn-glycero-3-phospho]-glycerol + (9Z,12Z)-octadecadienoyl-CoA = 1'-[1-acyl-2-(9Z,12Z)-octadecadienoyl-sn-glycero-3-phospho],3'-[1-acyl,2-hydroxy-sn-glycero-3-phospho]-glycerol + CoA. The enzyme catalyses 1',3'-bis-[1-acyl-sn-glycero-3-phospho]-glycerol + hexadecanoyl-CoA = 1'-[1-acyl-2-hexadecanoyl-sn-glycero-3-phospho],3'-[1-acyl,2-hydroxy-sn-glycero-3-phospho]-glycerol + CoA. It carries out the reaction 1',3'-bis-[1-acyl-sn-glycero-3-phospho]-glycerol + octadecanoyl-CoA = 1'-[1-acyl-2-octadecanoyl-sn-glycero-3-phospho],3'-[1-acyl,2-hydroxy-sn-glycero-3-phospho]-glycerol + CoA. It catalyses the reaction 1'-[1,2-diacyl-sn-glycero-3-phospho],3'-[1-acyl-sn-glycero-3-phospho]-glycerol + octanoyl-CoA = 1'-[1,2-diacyl-sn-glycero-3-phospho],3'-[1-acyl,2-octanoyl-sn-glycero-3-phospho]-glycerol + CoA. The catalysed reaction is 1',3'-bis-[1-acyl-sn-glycero-3-phospho]-glycerol + octanoyl-CoA = 1'-[1-acyl-2-octanoyl-sn-glycero-3-phospho],3'-[1-acyl,2-hydroxy-sn-glycero-3-phospho]-glycerol + CoA. The enzyme catalyses 1'-[1,2-diacyl-sn-glycero-3-phospho],3'-[1-acyl-sn-glycero-3-phospho]-glycerol + hexadecanoyl-CoA = 1'-[1,2-diacyl-sn-glycero-3-phospho],3'-[1-acyl,2-hexadecanoyl-sn-glycero-3-phospho]-glycerol + CoA. It carries out the reaction 1'-[1,2-diacyl-sn-glycero-3-phospho],3'-[1-acyl-sn-glycero-3-phospho]-glycerol + (5Z,8Z,11Z,14Z)-eicosatetraenoyl-CoA = 1'-[1,2-diacyl-sn-glycero-3-phospho],3'-[1-acyl,2-(5Z,8Z,11Z,14Z)-eicosatetraenoyl-sn-glycero-3-phospho]-glycerol + CoA. It catalyses the reaction 1',3'-bis-[1-acyl-sn-glycero-3-phospho]-glycerol + (5Z,8Z,11Z,14Z)-eicosatetraenoyl-CoA = 1'-[1-acyl-2-(5Z,8Z,11Z,14Z)-eicosatetraenoyl-sn-glycero-3-phospho],3'-[1-acyl,2-hydroxy-sn-glycero-3-phospho]-glycerol + CoA. The catalysed reaction is a 1-acyl-sn-glycero-3-phospho-(1D-myo-inositol) + octadecanoyl-CoA = a 1-acyl-2-octadecanoyl-sn-glycero-3-phospho-(1D-myo-inositol) + CoA. The enzyme catalyses a 2-acyl-sn-glycero-3-phospho-D-myo-inositol + octadecanoyl-CoA = 1-octadecanoyl-2-acyl-sn-glycero-3-phospho-1D-myo-inositol + CoA. It participates in phospholipid metabolism; CDP-diacylglycerol biosynthesis; CDP-diacylglycerol from sn-glycerol 3-phosphate: step 2/3. In terms of biological role, exhibits acyl-CoA:lysocardiolipin acyltransferase (ALCAT) activity; catalyzes the reacylation of lyso-cardiolipin to cardiolipin (CL), a key step in CL remodeling. Recognizes both monolysocardiolipin and dilysocardiolipin as substrates with a preference for linoleoyl-CoA and oleoyl-CoA as acyl donors. Also exhibits 1-acyl-sn-glycerol-3-phosphate acyltransferase activity (AGPAT) activity; converts 1-acyl-sn-glycerol-3- phosphate (lysophosphatidic acid or LPA) into 1,2-diacyl-sn-glycerol-3- phosphate (phosphatidic acid or PA) by incorporating an acyl moiety at the sn-2 position of the glycerol backbone. Possesses both lysophosphatidylinositol acyltransferase (LPIAT) and lysophosphatidylglycerol acyltransferase (LPGAT) activities. Required for establishment of the hematopoietic and endothelial lineages. In Homo sapiens (Human), this protein is Lysocardiolipin acyltransferase 1 (LCLAT1).